A 325-amino-acid chain; its full sequence is DNA-directed RNA polymerase subunit alpha (325 aa).

An alpha N-terminal domain (alpha-NTD) region spans residues 1–231; that stretch reads MQTSLLKPKI…DQLSVFAALE (231 aa). Residues 246–325 are alpha C-terminal domain (alpha-CTD); it reads IDPILLRPVD…ENWPPAGLDK (80 aa).

Belongs to the RNA polymerase alpha chain family. Homodimer. The RNAP catalytic core consists of 2 alpha, 1 beta, 1 beta' and 1 omega subunit. When a sigma factor is associated with the core the holoenzyme is formed, which can initiate transcription.

The enzyme catalyses RNA(n) + a ribonucleoside 5'-triphosphate = RNA(n+1) + diphosphate. Its function is as follows. DNA-dependent RNA polymerase catalyzes the transcription of DNA into RNA using the four ribonucleoside triphosphates as substrates. The protein is DNA-directed RNA polymerase subunit alpha of Burkholderia thailandensis (strain ATCC 700388 / DSM 13276 / CCUG 48851 / CIP 106301 / E264).